The sequence spans 130 residues: Small ribosomal subunit protein uS8A (130 aa).

This sequence belongs to the universal ribosomal protein uS8 family.

This is Small ribosomal subunit protein uS8A (RpS15Aa) from Drosophila melanogaster (Fruit fly).